Here is a 402-residue protein sequence, read N- to C-terminus: Putative cytochrome P450 133B1 (402 aa).

Cys348 contributes to the heme binding site.

It belongs to the cytochrome P450 family. It depends on heme as a cofactor.

The polypeptide is Putative cytochrome P450 133B1 (cyp133B1) (Xylella fastidiosa (strain 9a5c)).